The primary structure comprises 518 residues: Glucose-6-phosphate 1-dehydrogenase (518 aa).

NADP(+) is bound by residues 36 to 43, Arg70, and Lys169; that span reads GASGDLAK. D-glucose 6-phosphate is bound by residues Lys169, 199 to 203, Glu237, and Asp256; that span reads HYLGK. Residue His261 is the Proton acceptor of the active site. NADP(+) is bound at residue Arg356. Residues Lys359 and Arg364 each contribute to the D-glucose 6-phosphate site. NADP(+) is bound by residues Lys365, Arg369, and Arg392. Position 394 (Gln394) interacts with D-glucose 6-phosphate. Residues 400 to 402, 420 to 422, Arg486, Tyr502, and Trp508 contribute to the NADP(+) site; these read YFK and DLT.

This sequence belongs to the glucose-6-phosphate dehydrogenase family.

Its subcellular location is the cytoplasm. The protein resides in the cytosol. The enzyme catalyses D-glucose 6-phosphate + NADP(+) = 6-phospho-D-glucono-1,5-lactone + NADPH + H(+). It participates in carbohydrate degradation; pentose phosphate pathway; D-ribulose 5-phosphate from D-glucose 6-phosphate (oxidative stage): step 1/3. Functionally, cytosolic glucose-6-phosphate dehydrogenase that catalyzes the first and rate-limiting step of the oxidative branch within the pentose phosphate pathway/shunt, an alternative route to glycolysis for the dissimilation of carbohydrates and a major source of reducing power and metabolic intermediates for fatty acid and nucleic acid biosynthetic processes. In Drosophila yakuba (Fruit fly), this protein is Glucose-6-phosphate 1-dehydrogenase (Zw).